A 163-amino-acid polypeptide reads, in one-letter code: Phosphopantetheine adenylyltransferase (163 aa).

Thr-10 is a substrate binding site. Residues Thr-10–Phe-11 and His-18 contribute to the ATP site. Residues Lys-42, Leu-74, and Arg-88 each contribute to the substrate site. Residues Gly-89 to Arg-91, Glu-99, and Asn-124 to Thr-130 contribute to the ATP site.

It belongs to the bacterial CoaD family. Homohexamer. Mg(2+) serves as cofactor.

It is found in the cytoplasm. It carries out the reaction (R)-4'-phosphopantetheine + ATP + H(+) = 3'-dephospho-CoA + diphosphate. It functions in the pathway cofactor biosynthesis; coenzyme A biosynthesis; CoA from (R)-pantothenate: step 4/5. In terms of biological role, reversibly transfers an adenylyl group from ATP to 4'-phosphopantetheine, yielding dephospho-CoA (dPCoA) and pyrophosphate. In Shewanella oneidensis (strain ATCC 700550 / JCM 31522 / CIP 106686 / LMG 19005 / NCIMB 14063 / MR-1), this protein is Phosphopantetheine adenylyltransferase.